Consider the following 101-residue polypeptide: Trp operon repressor homolog (101 aa).

A DNA-binding region spans residues 59–82; it reads QREIQQNLNTSAATITRGSNMLKL.

The protein belongs to the TrpR family. In terms of assembly, homodimer.

It is found in the cytoplasm. Its function is as follows. This protein is an aporepressor. When complexed with L-tryptophan it binds the operator region of the trp operon and prevents the initiation of transcription. This is Trp operon repressor homolog from Mannheimia succiniciproducens (strain KCTC 0769BP / MBEL55E).